A 457-amino-acid polypeptide reads, in one-letter code: Multidrug resistance protein MdtK (457 aa).

12 helical membrane passes run 11–31 (LLAL…MGFV), 53–73 (IWLP…PVIA), 93–113 (WLAG…GYII), 127–147 (AVGY…FQVA), 160–180 (GMVI…IFIY), 188–208 (LGGV…FIAM), 243–263 (LPIA…ALLV), 276–296 (IALN…AAVT), 314–334 (AART…IFTV), 357–377 (LMLL…GSGI), 387–407 (IFFI…YILA), and 418–438 (PAGF…MMML).

This sequence belongs to the multi antimicrobial extrusion (MATE) (TC 2.A.66.1) family. MdtK subfamily.

Its subcellular location is the cell inner membrane. Multidrug efflux pump that functions probably as a Na(+)/drug antiporter. The protein is Multidrug resistance protein MdtK of Citrobacter koseri (strain ATCC BAA-895 / CDC 4225-83 / SGSC4696).